The sequence spans 540 residues: Anti-sigma-I factor RsgI7 (540 aa).

The RsgI N-terminal anti-sigma domain occupies 1-48; that stretch reads MRAMVVDMNDKYAVVVNKEGQYIKIKRKAEHRLGYQVELPDRVIGFER. Residues 1-50 lie on the Cytoplasmic side of the membrane; that stretch reads MRAMVVDMNDKYAVVVNKEGQYIKIKRKAEHRLGYQVELPDRVIGFERRT. A helical transmembrane segment spans residues 51–73; that stretch reads LLKVVSVAAALLIVSSISFAVYS. Residues 74 to 540 lie on the Extracellular side of the membrane; it reads YNLPYSYVNV…PGKEILKKRC (467 aa). Basic and acidic residues-rich tracts occupy residues 238–256, 319–329, 338–351, 359–370, and 398–419; these read DIKK…KKVN, SGIDKGNKDSK, NDVK…KTNS, VSKDNKNDKADG, and SKDD…EDNK. 2 disordered regions span residues 238-429 and 481-540; these read DIKK…CPQY and QEEQ…KKRC. Positions 451–501 form a coiled coil; it reads KEDMTKQNDEWFKKMQEEQKKQYDEWLKKMQEEQKKQHDEWVKKMEEMKNT.

In terms of assembly, interacts (via RsgI N-terminal anti-sigma domain) with SigI7.

The protein localises to the cell membrane. In terms of biological role, anti-sigma factor for SigI7. Negatively regulates SigI7 activity through direct interaction. In Acetivibrio thermocellus (strain ATCC 27405 / DSM 1237 / JCM 9322 / NBRC 103400 / NCIMB 10682 / NRRL B-4536 / VPI 7372) (Clostridium thermocellum), this protein is Anti-sigma-I factor RsgI7.